Reading from the N-terminus, the 408-residue chain is E3 ubiquitin-protein ligase IE2 (408 aa).

A compositionally biased stretch (polar residues) spans 1-10; that stretch reads MSRQINAATP. Disordered regions lie at residues 1–67 and 176–199; these read MSRQ…ENVQ and QSPDLFASPQSPQPQQQQQQQSEP. Over residues 13 to 25 the composition is skewed to basic residues; it reads SRRHRLSLSRRRI. Positions 30-47 are enriched in low complexity; the sequence is SPEAQPSSSSRSQPSSSS. 4 tandem repeats follow at residues 34-41, 42-49, 51-54, and 55-58. The 2 X 8 AA tandem repeats of Q-P-S-S-S-S-R-S stretch occupies residues 34 to 49; sequence QPSSSSRSQPSSSSRS. A 2 X 4 AA tandem repeats of R-R-Q-E region spans residues 51–58; it reads RRQERRQE. Residues 183–197 are compositionally biased toward low complexity; that stretch reads SPQSPQPQQQQQQQS. The RING-type zinc finger occupies 207 to 255; that stretch reads CNICFTTFKDTKNVNSSFVTSIHCNHAVCFKCYVKIIMDNSVYKCFCSA.

It belongs to the alphabaculovirus IE2 protein family. Homooligomer. In terms of processing, auto-ubiquitinated.

Its subcellular location is the host nucleus. It carries out the reaction S-ubiquitinyl-[E2 ubiquitin-conjugating enzyme]-L-cysteine + [acceptor protein]-L-lysine = [E2 ubiquitin-conjugating enzyme]-L-cysteine + N(6)-ubiquitinyl-[acceptor protein]-L-lysine.. Its function is as follows. RING-finger E3 ubiquitin ligase that plays an important regulatory role during the initial stages of infection. Migrates to specific nuclear foci early in infection supposely to prepare the sites for viral transcription and replication by targeting and ubiquitinating host proteins. Acts as a transcriptional activator and activates a number of viral promoters including itself, IE1 and the promoter of 39K gene. In Lepidoptera (butterflies and moths), this protein is E3 ubiquitin-protein ligase IE2 (IE2).